A 688-amino-acid polypeptide reads, in one-letter code: Sciellin (688 aa).

Positions 1–25 (MSNVTLRKMSPTGNEMKSTTQGTTR) are enriched in polar residues. Residues 1–29 (MSNVTLRKMSPTGNEMKSTTQGTTRKQQD) form a disordered region. Residue K83 is modified to N6-acetyllysine. The segment at 134–231 (QPGGSLNANT…TNRSAERNIR (98 aa)) is disordered. Residues 140–154 (NANTSNTIASTSATT) show a composition bias toward low complexity. Residues 186 to 195 (VHPPIPPKPS) show a composition bias toward pro residues. A run of 16 repeats spans residues 251-266 (GEELDNLIKMNKSLNR), 267-286 (NQGLDSLFRANPKVEEREKR), 287-306 (AKSLESLIYMSTRTDKDGKG), 307-326 (IQSLGSPIKVNQRTDKNEKG), 327-346 (RQNLESVAKVNARMNKTSRR), 347-366 (SEDLDNATEVNPKGHENTTG), 367-386 (KKDLDGLIKVDPETNKNITR), 387-406 (GQSLDNLIKVTPEVKRSNQG), 407-426 (SKDLNNFIKVYPGTEKSTEG), 427-446 (GQSLDSLIKVTPERNRTNQG), 447-465 (NQDLENLIKVIPSANKSSE), 466-484 (QGLDEHINVSPKAVKNTDG), 485-504 (KQDLDKLIKVNPEIFTNNQR), 505-523 (NQDLANLIKVNPAVIRNNQ), 524-543 (SQDLDNLIKVKPSALRNTNR), and 544-563 (DQNLENLIEVNSHVSENKNG). The 16 X approximate tandem repeats stretch occupies residues 251-563 (GEELDNLIKM…NSHVSENKNG (313 aa)). Position 289 is a phosphoserine (S289). Positions 340 to 373 (MNKTSRRSEDLDNATEVNPKGHENTTGKKDLDGL) are disordered. Residues 358–373 (PKGHENTTGKKDLDGL) are compositionally biased toward basic and acidic residues. The residue at position 389 (S389) is a Phosphoserine. In terms of domain architecture, LIM zinc-binding spans 619 to 685 (DMCTYCRKPL…EPCYSKIMAK (67 aa)).

Highly expressed in esophagus. It is also expressed in keratinocytes, amniotic tissue, foreskin stratum spinosum and stratum granulosum, hair follicle and nail.

The protein localises to the cytoplasm. Its subcellular location is the membrane. In terms of biological role, may function in the assembly or regulation of proteins in the cornified envelope. The LIM domain may be involved in homotypic or heterotypic associations and may function to localize sciellin to the cornified envelope. The protein is Sciellin (SCEL) of Homo sapiens (Human).